Here is a 589-residue protein sequence, read N- to C-terminus: Sentrin-specific protease 2 (589 aa).

Positions 28-31 match the Nuclear localization signal motif; sequence KRRR. Phosphoserine is present on Ser-32. The short motif at 46-51 is the Nuclear localization signal element; that stretch reads PAKRPR. The interval 71 to 382 is axin-binding; the sequence is GFPFQLTTKP…EKEISNALGH (312 aa). Disordered stretches follow at residues 148–179 and 191–210; these read SFGF…LMWK and EESG…GVQK. The Nuclear export signal motif lies at 317–332; the sequence is LEPDLSEEVSARLRLG. A phosphoserine mark is found at Ser-333 and Ser-344. The tract at residues 395-559 is protease; that stretch reads LRITRGDIQT…MFTCKYADYI (165 aa). Catalysis depends on residues His-478 and Asp-495. Cys-548 acts as the Nucleophile in catalysis.

It belongs to the peptidase C48 family. Binds to SUMO2 and SUMO3. Interacts with the C-terminal domain of NUP153 via its N-terminus. Interacts with MTA1. Post-translationally, polyubiquitinated; which leads to proteasomal degradation.

Its subcellular location is the nucleus. The protein resides in the nuclear pore complex. The protein localises to the nucleus membrane. It is found in the cytoplasm. Protease that catalyzes two essential functions in the SUMO pathway. The first is the hydrolysis of an alpha-linked peptide bond at the C-terminal end of the small ubiquitin-like modifier (SUMO) propeptides, SUMO1, SUMO2 and SUMO3 leading to the mature form of the proteins. The second is the deconjugation of SUMO1, SUMO2 and SUMO3 from targeted proteins, by cleaving an epsilon-linked peptide bond between the C-terminal glycine of the mature SUMO and the lysine epsilon-amino group of the target protein. May down-regulate CTNNB1 levels and thereby modulate the Wnt pathway. Deconjugates SUMO2 from MTA1. Plays a dynamic role in adipogenesis by desumoylating and promoting the stabilization of CEBPB. Acts as a regulator of the cGAS-STING pathway by catalyzing desumoylation of CGAS and STING1 during the late phase of viral infection. In Pongo abelii (Sumatran orangutan), this protein is Sentrin-specific protease 2 (SENP2).